The primary structure comprises 315 residues: tRNA dimethylallyltransferase (315 aa).

13-20 (GPTAVGKT) contributes to the ATP binding site. Substrate is bound at residue 15 to 20 (TAVGKT). Residues 38-41 (DSMQ) form an interaction with substrate tRNA region.

It belongs to the IPP transferase family. Monomer. The cofactor is Mg(2+).

It catalyses the reaction adenosine(37) in tRNA + dimethylallyl diphosphate = N(6)-dimethylallyladenosine(37) in tRNA + diphosphate. In terms of biological role, catalyzes the transfer of a dimethylallyl group onto the adenine at position 37 in tRNAs that read codons beginning with uridine, leading to the formation of N6-(dimethylallyl)adenosine (i(6)A). The chain is tRNA dimethylallyltransferase from Staphylococcus saprophyticus subsp. saprophyticus (strain ATCC 15305 / DSM 20229 / NCIMB 8711 / NCTC 7292 / S-41).